The following is a 227-amino-acid chain: Cytochrome c oxidase subunit 2 (227 aa).

Residues 1–14 lie on the Mitochondrial intermembrane side of the membrane; it reads MAYPLQMGLQDATS. A helical membrane pass occupies residues 15-45; it reads PIMEELLHFHDHTLMIVFLISSLVLYIISLM. Residues 46–59 lie on the Mitochondrial matrix side of the membrane; the sequence is LTTKLTHTSTMDAQ. The chain crosses the membrane as a helical span at residues 60-87; sequence EVETVWTILPAIILILIALPSLRILYMM. The Mitochondrial intermembrane segment spans residues 88-227; it reads DEINNPSLTV…HFEKWSTSML (140 aa). Histidine 161, cysteine 196, glutamate 198, cysteine 200, histidine 204, and methionine 207 together coordinate Cu cation. Glutamate 198 contributes to the Mg(2+) binding site.

This sequence belongs to the cytochrome c oxidase subunit 2 family. In terms of assembly, component of the cytochrome c oxidase (complex IV, CIV), a multisubunit enzyme composed of 14 subunits. The complex is composed of a catalytic core of 3 subunits MT-CO1, MT-CO2 and MT-CO3, encoded in the mitochondrial DNA, and 11 supernumerary subunits COX4I, COX5A, COX5B, COX6A, COX6B, COX6C, COX7A, COX7B, COX7C, COX8 and NDUFA4, which are encoded in the nuclear genome. The complex exists as a monomer or a dimer and forms supercomplexes (SCs) in the inner mitochondrial membrane with NADH-ubiquinone oxidoreductase (complex I, CI) and ubiquinol-cytochrome c oxidoreductase (cytochrome b-c1 complex, complex III, CIII), resulting in different assemblies (supercomplex SCI(1)III(2)IV(1) and megacomplex MCI(2)III(2)IV(2)). Found in a complex with TMEM177, COA6, COX18, COX20, SCO1 and SCO2. Interacts with TMEM177 in a COX20-dependent manner. Interacts with COX20. Interacts with COX16. The cofactor is Cu cation.

It is found in the mitochondrion inner membrane. It catalyses the reaction 4 Fe(II)-[cytochrome c] + O2 + 8 H(+)(in) = 4 Fe(III)-[cytochrome c] + 2 H2O + 4 H(+)(out). Functionally, component of the cytochrome c oxidase, the last enzyme in the mitochondrial electron transport chain which drives oxidative phosphorylation. The respiratory chain contains 3 multisubunit complexes succinate dehydrogenase (complex II, CII), ubiquinol-cytochrome c oxidoreductase (cytochrome b-c1 complex, complex III, CIII) and cytochrome c oxidase (complex IV, CIV), that cooperate to transfer electrons derived from NADH and succinate to molecular oxygen, creating an electrochemical gradient over the inner membrane that drives transmembrane transport and the ATP synthase. Cytochrome c oxidase is the component of the respiratory chain that catalyzes the reduction of oxygen to water. Electrons originating from reduced cytochrome c in the intermembrane space (IMS) are transferred via the dinuclear copper A center (CU(A)) of subunit 2 and heme A of subunit 1 to the active site in subunit 1, a binuclear center (BNC) formed by heme A3 and copper B (CU(B)). The BNC reduces molecular oxygen to 2 water molecules using 4 electrons from cytochrome c in the IMS and 4 protons from the mitochondrial matrix. This is Cytochrome c oxidase subunit 2 (MT-CO2) from Phoca vitulina (Harbor seal).